A 320-amino-acid polypeptide reads, in one-letter code: L-lactate dehydrogenase (320 aa).

Residues valine 18, aspartate 39, arginine 44, tyrosine 69, and 83–84 (GA) contribute to the NAD(+) site. Substrate is bound by residues glutamine 86 and arginine 92. NAD(+) is bound by residues serine 105, 122–124 (AAN), and serine 147. A substrate-binding site is contributed by 124-127 (NPVD). Position 152–155 (152–155 (DSSR)) interacts with substrate. Catalysis depends on histidine 179, which acts as the Proton acceptor. Tyrosine 223 is subject to Phosphotyrosine. Residue threonine 232 coordinates substrate.

It belongs to the LDH/MDH superfamily. LDH family. Homotetramer.

The protein localises to the cytoplasm. The enzyme catalyses (S)-lactate + NAD(+) = pyruvate + NADH + H(+). It functions in the pathway fermentation; pyruvate fermentation to lactate; (S)-lactate from pyruvate: step 1/1. Its activity is regulated as follows. The quaternary structure is constitutionally similar to the active conformation of allosteric LDHs, and the regulation is independent of the fructose 1,6-bisphosphate-binding site. In terms of biological role, catalyzes the conversion of lactate to pyruvate. This Lactiplantibacillus pentosus (Lactobacillus pentosus) protein is L-lactate dehydrogenase.